Consider the following 782-residue polypeptide: Homeotic protein proboscipedia (782 aa).

Disordered regions lie at residues 1 to 23 (MQEVCSSLDTTSMGTQIKSESPL), 153 to 195 (PQTP…VPEN), 251 to 336 (MKHK…GISS), 358 to 380 (SSVSLDEDIEESSPIKVKKKDDG), 439 to 493 (IATP…QQQP), and 547 to 586 (YYNYNDTNGTPYLNHQQQHHHHAQHHQQQQHHQNHVADFE). Positions 164 to 169 (EYPWMK) match the Antp-type hexapeptide motif. Positions 198 to 257 (PRRLRTAYTNTQLLELEKEFHFNKYLCRPRRIEIAASLDLTERQVKVWFQNRRMKHKRQT) form a DNA-binding region, homeobox. The span at 308–321 (NNNTPSATNNNPSA) shows a compositional bias: low complexity. A compositionally biased stretch (polar residues) spans 322–336 (GNLTPNSSLETGISS). A compositionally biased stretch (gly residues) spans 452–463 (NGSGGGPAGGYF). Residues 464-493 (PGYYPSPKQQQQVQQQQLHPQQQQLPQQQP) are compositionally biased toward low complexity. Over residues 563–580 (QQHHHHAQHHQQQQHHQN) the composition is skewed to basic residues.

The protein belongs to the Antp homeobox family. Proboscipedia subfamily.

The protein localises to the nucleus. In terms of biological role, sequence-specific transcription factor which is part of a developmental regulatory system that provides cells with specific positional identities on the anterior-posterior axis. Controls development of mouthparts, and labial and maxillary palps. This chain is Homeotic protein proboscipedia (pb), found in Drosophila melanogaster (Fruit fly).